Consider the following 595-residue polypeptide: GRB2-associated-binding protein 3 (595 aa).

The region spanning 5–117 is the PH domain; sequence DTVCMGWLIK…WVHSISQVCN (113 aa). The disordered stretch occupies residues 295–339; the sequence is SGVKELNIMSNTPPPRPPKPSYLSEQRQDQPLLTGHSSNKKPGYT. Over residues 317 to 331 the composition is skewed to polar residues; that stretch reads LSEQRQDQPLLTGHS. The residue at position 346 (serine 346) is a Phosphoserine. 2 disordered regions span residues 389–408 and 418–463; these read PSAE…SELR and PMSS…QEHT. A compositionally biased stretch (polar residues) spans 454-463; sequence RNLSTIQEHT. Serine 480 bears the Phosphoserine mark. The segment at 493-513 is disordered; it reads STPSEEEEEEEEEEEEEEEEE. Residues 496 to 513 show a composition bias toward acidic residues; the sequence is SEEEEEEEEEEEEEEEEE.

It belongs to the GAB family. Interacts with PIK3R/p85, SHP2 and GRAP2/MONA. May interact with Grb2. In terms of processing, phosphorylated on tyrosine residue(s) after macrophage colony-stimulating factor (M-CSF) receptor stimulation. As to expression, highly expressed in spleen and thymus and weakly in brain, heart, lung, kidney, uterus, and embryonic stem cells. Also expressed in myeloid and macrophage cell lines.

The polypeptide is GRB2-associated-binding protein 3 (Gab3) (Mus musculus (Mouse)).